Here is a 354-residue protein sequence, read N- to C-terminus: Envelope protein US28 (354 aa).

Topologically, residues 1–37 (MTPTTTTAELTTEFDYDEDATPCVFTDVLNQSKPVTL) are extracellular. An N-linked (GlcNAc...) asparagine; by host glycan is attached at Asn-30. The chain crosses the membrane as a helical span at residues 38-58 (FLYGVVFLFGSIGNFLVIFTI). At 59 to 69 (TWRRRIQCSGD) the chain is on the cytoplasmic side. A helical membrane pass occupies residues 70–90 (VYFINLAAADLLFVCTLPLWM). Residues 91-101 (QYLLDHNSLAS) lie on the Extracellular side of the membrane. A helical transmembrane segment spans residues 102 to 122 (VPCTLLTACFYVAMFASLCFI). At 123-145 (TEIALDRYYAIVYMRYRPVKQAC) the chain is on the cytoplasmic side. A helical membrane pass occupies residues 146–166 (LFSIFWWIFAVIIAIPHFMVV). The Extracellular segment spans residues 167 to 183 (TKKDNQCMTDYDYLEVS). The helical transmembrane segment at 184–204 (YPIILNVELMLGAFVIPLSVI) threads the bilayer. Residues 205–228 (SYCYYRISRIVAVSQSRHKGRIVR) are Cytoplasmic-facing. The helical transmembrane segment at 229 to 249 (VLIAVVLVFIIFWLPYHLTLF) threads the bilayer. Residues 250-273 (VDTLKLLKWISSSCEFERSLKRAL) are Extracellular-facing. The helical transmembrane segment at 274 to 294 (ILTESLAFCHCCLNPLLYVFV) threads the bilayer. At 295–354 (GTKFRQELHCLLAEFRQRLFSRDVSWYHSMSFSRRGSPSRRETSSDTLSDEVCRVSQIIP) the chain is on the cytoplasmic side.

The protein belongs to the G-protein coupled receptor 1 family. Interacts with host GPRASP1; this interaction targets US28 to lysosomes for degradation. Interacts with host CX3CL1/Fractalkine (via N-terminus). Phosphorylated. High phosphorylation occurs concomitantly with receptor endocytosis and correlate with low receptor presence at the plasma membrane.

The protein resides in the host cell membrane. Receptor for a C-C type chemokine. Binds to a great number of different CC-chemokines including CCL5/RANTES, CCL2/MCP-1, CCL3/MIP-1-alpha as well as CX3CL1/Fractalkine. Transduces signals resulting in the activation of MAP kinase signaling pathways and augmentation of intracellular calcium ion levels, leading to alterations in chemotactic behavior of vascular smooth muscle cells and macrophages. The US28 receptor also exhibits high levels of agonist-independent signaling activity and agonist-independent endocytosis. Interacts with the host Gi complex without activating it, thereby probably interfering with the chemokine-Gi signaling. May also function as a G protein sink to sequester G protein from the cell surface via internalization. Interacts with endogenous Gaq/11 subunits and thereby constitutively activates phospholipase C. This chain is Envelope protein US28 (US28), found in Human cytomegalovirus (strain Merlin) (HHV-5).